The sequence spans 1863 residues: Transient receptor potential cation channel subfamily M member 7 (1863 aa).

M1 is subject to N-acetylmethionine. Residues 1–850 (MSQKSWIEST…ITRKFYAFYH (850 aa)) are Cytoplasmic-facing. S101 is subject to Phosphoserine. Low complexity predominate over residues 544 to 555 (NRRSGRNTSSST). The segment at 544 to 574 (NRRSGRNTSSSTPQLRKSHETFGNRADKKEK) is disordered. The segment covering 560-573 (KSHETFGNRADKKE) has biased composition (basic and acidic residues). The chain crosses the membrane as a helical span at residues 851-876 (APIVKFWFNTLAYLGFLMLYTFVVLV). Topologically, residues 877–882 (KMEQLP) are extracellular. A helical transmembrane segment spans residues 883-904 (SVQEWIVIAYIFTYAIEKVREV). The Cytoplasmic portion of the chain corresponds to 905 to 923 (FMSEAGKISQKIKVWFSDY). A helical membrane pass occupies residues 924 to 943 (FNVSDTIAIISFFVGFGLRF). At 944–956 (GAKWNYINAYDNH) the chain is on the extracellular side. The helical transmembrane segment at 957 to 980 (VFVAGRLIYCLNIIFWYVRLLDFL) threads the bilayer. Over 981 to 999 (AVNQQAGPYVMMIGKMVAN) the chain is Cytoplasmic. The helical transmembrane segment at 1000 to 1023 (MFYIVVIMALVLLSFGVPRKAILY) threads the bilayer. At 1024–1025 (PH) the chain is on the extracellular side. The segment at residues 1026–1066 (EEPSWSLAKDIVFHPYWMIFGEVYAYEIDVCANDSTLPTIC) is an intramembrane region (pore-forming). Topologically, residues 1067 to 1069 (GPG) are extracellular. The chain crosses the membrane as a helical span at residues 1070-1098 (TWLTPFLQAVYLFVQYIIMVNLLIAFFNN). The Cytoplasmic segment spans residues 1099 to 1863 (VYLQVKAISN…EATNSVRLML (765 aa)). S-palmitoyl cysteine attachment occurs at residues C1143, C1144, and C1146. Phosphothreonine is present on T1163. Phosphoserine occurs at positions 1191, 1193, 1224, 1255, and 1258. A coiled-coil region spans residues 1198–1250 (RVTFERVEQMSIQIKEVGDRVNYIKRSLQSLDSQIGHLQDLSALTVDTLKTLT). T1265 is modified (phosphothreonine). Phosphoserine occurs at positions 1300, 1357, 1360, 1385, 1386, 1389, 1394, 1395, and 1403. The disordered stretch occupies residues 1380–1418 (NQKLGSSPNSSPHMSSPPTKFSVSTPSQPSCKSHLESTT). Residues 1385–1397 (SSPNSSPHMSSPP) show a composition bias toward low complexity. Residues 1398–1410 (TKFSVSTPSQPSC) are compositionally biased toward polar residues. T1404 carries the phosphothreonine modification. A phosphoserine mark is found at S1406 and S1445. T1454 carries the post-translational modification Phosphothreonine. At S1455 the chain carries Phosphoserine. Phosphothreonine occurs at positions 1466 and 1470. 6 positions are modified to phosphoserine: S1491, S1498, S1502, S1511, S1525, and S1531. The disordered stretch occupies residues 1498–1539 (SRRASTEDSPEVDSKAALLPDWLRDRPSNREMPSEGGTLNGL). Over residues 1519 to 1530 (WLRDRPSNREMP) the composition is skewed to basic and acidic residues. Residue T1535 is modified to Phosphothreonine. Residue S1541 is modified to Phosphoserine. Position 1549 is a phosphothreonine (T1549). Phosphoserine occurs at positions 1565 and 1567. Residue T1581 is modified to Phosphothreonine. The 231-residue stretch at 1592-1822 (ILNNSMSSWS…CCRKLKLPDL (231 aa)) folds into the Alpha-type protein kinase domain. 2 positions are modified to phosphoserine: S1596 and S1613. Residues G1619, G1620, L1621, R1622, and K1646 each contribute to the ADP site. The residue at position 1658 (S1658) is a Phosphoserine. Position 1683 is a phosphothreonine (T1683). Residues E1718, E1719, and M1721 each coordinate ADP. H1751 contacts Zn(2+). D1765 functions as the Proton acceptor in the catalytic mechanism. D1775 contributes to the ADP binding site. Residue S1777 is modified to Phosphoserine. Positions 1808, 1810, and 1814 each coordinate Zn(2+). T1828 is modified (phosphothreonine). The tract at residues 1838–1863 (ESSDLNLQSGNSTKESEATNSVRLML) is disordered. Over residues 1841–1863 (DLNLQSGNSTKESEATNSVRLML) the composition is skewed to polar residues. Phosphoserine occurs at positions 1846, 1849, and 1858.

This sequence in the C-terminal section; belongs to the protein kinase superfamily. Alpha-type protein kinase family. ALPK subfamily. The protein in the N-terminal section; belongs to the transient receptor (TC 1.A.4) family. LTrpC subfamily. TRPM7 sub-subfamily. Homodimer. Homotetramer. Forms heteromers with TRPM6; heteromeric channels are functionally different from the homomeric channels. Interacts with PLCB1. Zn(2+) serves as cofactor. In terms of processing, palmitoylated; palmitoylation at Cys-1143, Cys-1144 and Cys-1146 promotes TRPM7 trafficking from the Golgi to the surface membrane. Autophosphorylated; autophosphorylation regulates TRPM7 kinase activity towards its substrates. Post-translationally, the C-terminal kinase domain can be cleaved from the channel segment in a cell-type-specific fashion. TRPM7 is cleaved by caspase-8, dissociating the kinase from the ion-conducting pore. The cleaved kinase fragments (M7CKs) can translocate to the cell nucleus and binds chromatin-remodeling complex proteins in a Zn(2+)-dependent manner to ultimately phosphorylate specific Ser/Thr residues of histones. Found to be expressed in brain and skeletal muscle, with stronger signals in kidney, heart, liver and spleen.

It is found in the cell membrane. The protein resides in the cytoplasmic vesicle membrane. Its subcellular location is the nucleus. It carries out the reaction L-seryl-[protein] + ATP = O-phospho-L-seryl-[protein] + ADP + H(+). The enzyme catalyses L-threonyl-[protein] + ATP = O-phospho-L-threonyl-[protein] + ADP + H(+). The catalysed reaction is Mg(2+)(in) = Mg(2+)(out). It catalyses the reaction Ca(2+)(in) = Ca(2+)(out). It carries out the reaction Zn(2+)(in) = Zn(2+)(out). With respect to regulation, channel displays constitutive activity. Channel activity is negatively regulated by cytosolic Mg(2+), Mg-ATP and low intracellular pH. Resting free cytosolic Mg(2+) and Mg-ATP concentrations seem to be sufficient to block native TRPM7 channel activity. TRPM7 channel activity is highly dependent on membrane levels of phosphatidylinositol 4,5 bisphosphate (PIP2). PIP2 hydrolysis negatively regulates TRPM7 channel activity. TRPM7 kinase activity does not affect channel activity. The kinase activity is controlled through the autophosphorylation of a serine/threonine-rich region located N-terminal to the catalytic domain. In terms of biological role, bifunctional protein that combines an ion channel with an intrinsic kinase domain, enabling it to modulate cellular functions either by conducting ions through the pore or by phosphorylating downstream proteins via its kinase domain. The channel is highly permeable to divalent cations, specifically calcium (Ca2+), magnesium (Mg2+) and zinc (Zn2+) and mediates their influx. Controls a wide range of biological processes such as Ca2(+), Mg(2+) and Zn(2+) homeostasis, vesicular Zn(2+) release channel and intracellular Ca(2+) signaling, embryonic development, immune responses, cell motility, proliferation and differentiation. The C-terminal alpha-kinase domain autophosphorylates cytoplasmic residues of TRPM7. TRPM7 phosphorylates SMAD2, suggesting that TRPM7 kinase may play a role in activating SMAD signaling pathways. In vitro, TRPM7 kinase phosphorylates ANXA1 (annexin A1), myosin II isoforms and a variety of proteins with diverse cellular functions. Its function is as follows. The cleaved channel exhibits substantially higher current and potentiates Fas receptor signaling. The C-terminal kinase domain can be cleaved from the channel segment in a cell-type-specific fashion. In immune cells, the TRPM7 kinase domain is clipped from the channel domain by caspases in response to Fas-receptor stimulation. The cleaved kinase fragments can translocate to the nucleus, and bind chromatin-remodeling complex proteins in a Zn(2+)-dependent manner to ultimately phosphorylate specific Ser/Thr residues of histones known to be functionally important for cell differentiation and embryonic development. In Mus musculus (Mouse), this protein is Transient receptor potential cation channel subfamily M member 7 (Trpm7).